A 354-amino-acid chain; its full sequence is Uroporphyrinogen decarboxylase (354 aa).

Substrate-binding positions include 27–31, D77, Y154, S209, and H327; that span reads RQAGR.

Belongs to the uroporphyrinogen decarboxylase family. In terms of assembly, homodimer.

The protein localises to the cytoplasm. The catalysed reaction is uroporphyrinogen III + 4 H(+) = coproporphyrinogen III + 4 CO2. The protein operates within porphyrin-containing compound metabolism; protoporphyrin-IX biosynthesis; coproporphyrinogen-III from 5-aminolevulinate: step 4/4. Its function is as follows. Catalyzes the decarboxylation of four acetate groups of uroporphyrinogen-III to yield coproporphyrinogen-III. The polypeptide is Uroporphyrinogen decarboxylase (Shewanella pealeana (strain ATCC 700345 / ANG-SQ1)).